The primary structure comprises 514 residues: Citrate synthase 2, peroxisomal (514 aa).

Active-site residues include histidine 324, histidine 363, and aspartate 419.

The protein belongs to the citrate synthase family. As to expression, widely expressed. Expressed throughout the shoot. Expressed in flower, silique, stem, cauline leaf, young leaf, mature leaf and senescent leaf.

The protein resides in the peroxisome. It catalyses the reaction oxaloacetate + acetyl-CoA + H2O = citrate + CoA + H(+). The protein operates within carbohydrate metabolism; tricarboxylic acid cycle; isocitrate from oxaloacetate: step 1/2. Its function is as follows. Peroxisomal citrate synthase required for the fatty acid respiration in seedlings, citrate being exported from peroxisomes into mitochondria during respiration of triacylglycerol (TAG). Indeed, complete respiration requires the transfer of carbon in the form of citrate from the peroxisome to the mitochondria. This is Citrate synthase 2, peroxisomal (CSY2) from Arabidopsis thaliana (Mouse-ear cress).